Here is a 128-residue protein sequence, read N- to C-terminus: Small ribosomal subunit protein uS11 (128 aa).

Belongs to the universal ribosomal protein uS11 family. As to quaternary structure, part of the 30S ribosomal subunit. Interacts with proteins S7 and S18. Binds to IF-3.

Located on the platform of the 30S subunit, it bridges several disparate RNA helices of the 16S rRNA. Forms part of the Shine-Dalgarno cleft in the 70S ribosome. This chain is Small ribosomal subunit protein uS11, found in Wolbachia pipientis wMel.